The following is a 462-amino-acid chain: L-seryl-tRNA(Sec) selenium transferase (462 aa).

N6-(pyridoxal phosphate)lysine is present on Lys292.

This sequence belongs to the SelA family. Requires pyridoxal 5'-phosphate as cofactor.

The protein resides in the cytoplasm. The enzyme catalyses L-seryl-tRNA(Sec) + selenophosphate + H(+) = L-selenocysteinyl-tRNA(Sec) + phosphate. It participates in aminoacyl-tRNA biosynthesis; selenocysteinyl-tRNA(Sec) biosynthesis; selenocysteinyl-tRNA(Sec) from L-seryl-tRNA(Sec) (bacterial route): step 1/1. Converts seryl-tRNA(Sec) to selenocysteinyl-tRNA(Sec) required for selenoprotein biosynthesis. In Geobacter sulfurreducens (strain ATCC 51573 / DSM 12127 / PCA), this protein is L-seryl-tRNA(Sec) selenium transferase.